Consider the following 287-residue polypeptide: Kit ligand (287 aa).

The first 25 residues, 1 to 25 (MKKAQTWIITCFCLQLLLLNPLVKT), serve as a signal peptide directing secretion. Over 26–225 (QSSCGNPVTD…LGFISSSSLQ (200 aa)) the chain is Extracellular. 2 cysteine pairs are disulfide-bonded: C29-C117 and C68-C167. N100, N106, N149, N178, N200, and N206 each carry an N-linked (GlcNAc...) asparagine glycan. The helical transmembrane segment at 226–246 (GISIALTSLLSLLIGFILGVI) threads the bilayer. Residues 247–287 (YWKKTHPKSRPESNETTQCHGCQEENEISMLQQKEKEHLQV) lie on the Cytoplasmic side of the membrane.

It belongs to the SCF family. In terms of assembly, homodimer, non-covalently linked. Post-translationally, a soluble form is produced by proteolytic processing of isoform 1 in the extracellular domain.

It is found in the cell membrane. The protein resides in the secreted. It localises to the cytoplasm. Its subcellular location is the cytoskeleton. The protein localises to the cell projection. It is found in the lamellipodium. The protein resides in the filopodium. In terms of biological role, ligand for the receptor-type protein-tyrosine kinase KIT. Plays an essential role in the regulation of cell survival and proliferation, hematopoiesis, stem cell maintenance, gametogenesis, mast cell development, migration and function, and in melanogenesis. KITLG/SCF binding can activate several signaling pathways. Acts synergistically with other cytokines, probably interleukins. The chain is Kit ligand (KITLG) from Coturnix japonica (Japanese quail).